Reading from the N-terminus, the 453-residue chain is Alpha-2B adrenergic receptor (453 aa).

The Extracellular segment spans residues 1–17; sequence MSGPAMVHQEPYSVQAT. The helical transmembrane segment at 18 to 42 threads the bilayer; that stretch reads AAIASAITFLILFTIFGNALVILAV. Residues 43–54 are Cytoplasmic-facing; that stretch reads LTSRSLRAPQNL. A helical transmembrane segment spans residues 55 to 80; the sequence is FLVSLAAADILVATLIIPFSLANELL. At 81-90 the chain is on the extracellular side; it reads GYWYFWRAWC. The cysteines at positions 90 and 169 are disulfide-linked. Residues 91 to 113 traverse the membrane as a helical segment; sequence EVYLALDVLFCTSSIVHLCAISL. The Cytoplasmic portion of the chain corresponds to 114-135; sequence DRYWAVSRALEYNSKRTPRRIK. A helical membrane pass occupies residues 136–158; it reads CIILTVWLIAAVISLPPLIYKGD. The Extracellular segment spans residues 159–174; that stretch reads QRPEPHGLPQCELNQE. The chain crosses the membrane as a helical span at residues 175-198; the sequence is AWYILASSIGSFFAPCLIMILVYL. The Cytoplasmic segment spans residues 199–375; it reads RIYVIAKRSH…LSREKRFTFV (177 aa). Residues 214 to 329 form a disordered region; sequence AKRGSGEGES…ASPASVFNPP (116 aa). Residues 303-314 are compositionally biased toward acidic residues; sequence AEEDEEEVEECE. A helical membrane pass occupies residues 376-399; that stretch reads LAVVIGVFVVCWFPFFFSYSLGAI. At 400–408 the chain is on the extracellular side; the sequence is CPQHCKVPH. The helical transmembrane segment at 409-432 threads the bilayer; sequence GLFQFFFWIGYCNSSLNPVIYTIF. The Cytoplasmic portion of the chain corresponds to 433 to 453; the sequence is NQDFRRAFRRILCRQWTQTGW. Cys445 carries S-palmitoyl cysteine lipidation.

It belongs to the G-protein coupled receptor 1 family. Adrenergic receptor subfamily. ADRA2B sub-subfamily. Interacts with RAB26. Interacts with PPP1R9B. Interacts with GGA1, GGA2 and GGA3.

Its subcellular location is the cell membrane. Alpha-2 adrenergic receptors mediate the catecholamine-induced inhibition of adenylate cyclase through the action of G proteins. The protein is Alpha-2B adrenergic receptor (Adra2b) of Mus musculus (Mouse).